The chain runs to 716 residues: MSDSGASRLRRQLESGGFEARLYVKQLSQQSDGDRDLQEHRQRVQALAEETAQNLKRNVYQNYRQFIETAREISYLESEMYQLSHLLTEQKSSLESIPLALLPAAAAGASTGEDTAGAGPRERGAAQAGFLPGPAGVPREGPGTGEEGKQRTLTTLLEKVEGCRDLLETPGQYLVYNGDLVEYEADHMAQLQRVHGFLMNDCLLVATWLPQRRGMYRYNALYPLDRLAVVNVKDNPPMKDMFKLLMFPESRIFQAENAKIKREWLEVLEETKRALSDKRRREQEEAAALRAPPPVTSKGSNPFEDEAEEELATPEAEEEKVDLSMEWIQELPEDLDVCIAQRDFEGAVDLLDKLNHYLEDKPSPPSVKELRAKVDERVRQLTEVLVFELSPDRSLRGGPKATRRAVSQLIRLGQCTKACELFLRNRAAAVHTAIRQLRIEGATLLYIHKLCHVFFTSLLETAREFETDFAGTDSGCYSAFVVWARSAMGMFVDAFSKQVFDSKESLSTAAECVKVAKEHCQQLGEIGLDLTFIIHALLVKDIQGALLSYKEIIIEATKHRNSEEMWRRMNLMTPEALGKLKEEMRSCGVSNFEQYTGDDCWVNLSYTVVAFTKQTMGFLEEALKLYFPELHMVLLESLVEVILVAVQHVDYSLRCEQDPEKKTFIRQNASFLYDTVLPVVERRFEEGVGKPAKQLQDLRNASRLLRVNPESTTSVV.

Ser-15 carries the post-translational modification Phosphoserine. A compositionally biased stretch (low complexity) spans 110–119 (STGEDTAGAG). Positions 110–149 (STGEDTAGAGPRERGAAQAGFLPGPAGVPREGPGTGEEGK) are disordered. Positions 173-273 (YLVYNGDLVE…WLEVLEETKR (101 aa)) constitute a PH domain. The span at 275–284 (LSDKRRREQE) shows a compositional bias: basic and acidic residues. Residues 275–319 (LSDKRRREQEEAAALRAPPPVTSKGSNPFEDEAEEELATPEAEEE) form a disordered region. The span at 303–319 (FEDEAEEELATPEAEEE) shows a compositional bias: acidic residues. At Thr-313 the chain carries Phosphothreonine.

Belongs to the EXO84 family. In terms of assembly, the exocyst complex is composed of EXOC1, EXOC2, EXOC3, EXOC4, EXOC5, EXOC6, EXOC7 and EXOC8. Interacts (via PH domain) with GTP-bound RALA and RALB. Interacts with SH3BP1; required for the localization of both SH3BP1 and the exocyst to the leading edge of migrating cells.

The protein localises to the cytoplasm. It is found in the perinuclear region. Its subcellular location is the cell projection. The protein resides in the growth cone. Component of the exocyst complex involved in the docking of exocytic vesicles with fusion sites on the plasma membrane. The protein is Exocyst complex component 8 (Exoc8) of Rattus norvegicus (Rat).